The chain runs to 473 residues: Siroheme synthase (473 aa).

Residues Met1 to Leu222 are precorrin-2 dehydrogenase /sirohydrochlorin ferrochelatase. NAD(+) is bound by residues Glu37–Ile38 and Glu58–Lys59. The segment at Gly233–Pro473 is uroporphyrinogen-III C-methyltransferase. Residue Pro242 participates in S-adenosyl-L-methionine binding. Asp265 acts as the Proton acceptor in catalysis. Residue Lys287 is the Proton donor of the active site. S-adenosyl-L-methionine contacts are provided by residues Gly318 to Asp320, Ile323, Ser348 to Ala349, Met401, and Gly430.

The protein in the N-terminal section; belongs to the precorrin-2 dehydrogenase / sirohydrochlorin ferrochelatase family. It in the C-terminal section; belongs to the precorrin methyltransferase family.

It catalyses the reaction uroporphyrinogen III + 2 S-adenosyl-L-methionine = precorrin-2 + 2 S-adenosyl-L-homocysteine + H(+). The enzyme catalyses precorrin-2 + NAD(+) = sirohydrochlorin + NADH + 2 H(+). It carries out the reaction siroheme + 2 H(+) = sirohydrochlorin + Fe(2+). It functions in the pathway cofactor biosynthesis; adenosylcobalamin biosynthesis; precorrin-2 from uroporphyrinogen III: step 1/1. Its pathway is cofactor biosynthesis; adenosylcobalamin biosynthesis; sirohydrochlorin from precorrin-2: step 1/1. It participates in porphyrin-containing compound metabolism; siroheme biosynthesis; precorrin-2 from uroporphyrinogen III: step 1/1. The protein operates within porphyrin-containing compound metabolism; siroheme biosynthesis; siroheme from sirohydrochlorin: step 1/1. It functions in the pathway porphyrin-containing compound metabolism; siroheme biosynthesis; sirohydrochlorin from precorrin-2: step 1/1. Functionally, multifunctional enzyme that catalyzes the SAM-dependent methylations of uroporphyrinogen III at position C-2 and C-7 to form precorrin-2 via precorrin-1. Then it catalyzes the NAD-dependent ring dehydrogenation of precorrin-2 to yield sirohydrochlorin. Finally, it catalyzes the ferrochelation of sirohydrochlorin to yield siroheme. This is Siroheme synthase from Gluconobacter oxydans (strain 621H) (Gluconobacter suboxydans).